The chain runs to 145 residues: Lysozyme-like protein 4 (145 aa).

An N-terminal signal peptide occupies residues 1–19; it reads MQLYLVLLLISYLLTPIGA. In terms of domain architecture, C-type lysozyme spans 20-145; sequence SILGRCVVAK…LDRWLDGCEL (126 aa). Intrachain disulfides connect cysteine 25-cysteine 143, cysteine 49-cysteine 130, cysteine 84-cysteine 95, and cysteine 91-cysteine 109. Glutamate 54 is a catalytic residue.

The protein belongs to the glycosyl hydrolase 22 family. Monomer. As to expression, expressed in the brain, lung, ovary, uterus and testis. In testis expressed in the germinal epithelium and on the maturing spermatozoa (at protein level).

Its subcellular location is the secreted. The protein localises to the cytoplasmic vesicle. The protein resides in the secretory vesicle. It is found in the acrosome. It localises to the cell projection. Its subcellular location is the cilium. The protein localises to the flagellum. May be involved in fertilization. Has no detectable bacteriolytic and lysozyme activities in vitro. This is Lysozyme-like protein 4 (Lyzl4) from Rattus norvegicus (Rat).